The sequence spans 404 residues: Putative replication protein C (404 aa).

The tract at residues 249 to 287 (PDQIERHKQNSHPESTNEFEPSSREEQGERPSPAIEPQR) is disordered.

The protein to A.rhizogenes possible replication protein C (RepC).

The sequence is that of Putative replication protein C from Sinorhizobium fredii (strain NBRC 101917 / NGR234).